A 418-amino-acid chain; its full sequence is MRRSMASNGHILTASSVVGASSAFQNPCLAKVEVQPNLPQRTVLGVIGDNEQRRRSVSRGGVPAKSLPGIENVLAFPGKILSANPAPVAPKPSFTVYVDEPTETYSVEIDCPSLGDEDSNIVKQNIHLLLDISEASPMVVDTSPQTSPEDDSVTDPDAVAVSEYIHEIHQYLREAELKHRPKAYYMRKQPDITSAMRTILVDWLVEVGEEYKLHTETLYLAMNYLDRFLSCMSVLRGKLQLVGTAAILLASKYEEIYPPDVDEFVYITDDTYSKKQLLRMEHVLLKVLAFDLTVPTVNQFLLQYLQRHAVSVKMEHLAMYMAELTLLEVEPFLKYVPSLTAAAAYCLANYALNKVFWPDTLEAFTGYALSDIAPCLSDLHQFCLGAPYQAQQAIREKYKTTKYMQVSLLEMPSILPLN.

Belongs to the cyclin family. Cyclin AB subfamily. As to quaternary structure, interacts with the CDK1 and the CDK2 protein kinases to form a serine/threonine kinase holoenzyme complex. The cyclin subunit imparts substrate specificity to the complex.

It is found in the nucleus. Functionally, may be involved in the control of the cell cycle at the G1/S (start) and G2/M (mitosis) transitions. This chain is Cyclin-A1 (ccna1), found in Xenopus laevis (African clawed frog).